Consider the following 247-residue polypeptide: Probable transcriptional regulatory protein lpl1249 (247 aa).

It belongs to the TACO1 family.

The protein resides in the cytoplasm. The protein is Probable transcriptional regulatory protein lpl1249 of Legionella pneumophila (strain Lens).